The following is a 165-amino-acid chain: Crossover junction endodeoxyribonuclease RuvC (165 aa).

Residues aspartate 7, glutamate 68, and histidine 142 contribute to the active site. Mg(2+) is bound by residues aspartate 7, glutamate 68, and histidine 142.

Belongs to the RuvC family. In terms of assembly, homodimer which binds Holliday junction (HJ) DNA. The HJ becomes 2-fold symmetrical on binding to RuvC with unstacked arms; it has a different conformation from HJ DNA in complex with RuvA. In the full resolvosome a probable DNA-RuvA(4)-RuvB(12)-RuvC(2) complex forms which resolves the HJ. Requires Mg(2+) as cofactor.

Its subcellular location is the cytoplasm. It catalyses the reaction Endonucleolytic cleavage at a junction such as a reciprocal single-stranded crossover between two homologous DNA duplexes (Holliday junction).. The RuvA-RuvB-RuvC complex processes Holliday junction (HJ) DNA during genetic recombination and DNA repair. Endonuclease that resolves HJ intermediates. Cleaves cruciform DNA by making single-stranded nicks across the HJ at symmetrical positions within the homologous arms, yielding a 5'-phosphate and a 3'-hydroxyl group; requires a central core of homology in the junction. The consensus cleavage sequence is 5'-(A/T)TT(C/G)-3'. Cleavage occurs on the 3'-side of the TT dinucleotide at the point of strand exchange. HJ branch migration catalyzed by RuvA-RuvB allows RuvC to scan DNA until it finds its consensus sequence, where it cleaves and resolves the cruciform DNA. This chain is Crossover junction endodeoxyribonuclease RuvC, found in Anaplasma marginale (strain Florida).